Reading from the N-terminus, the 559-residue chain is POU domain protein 1 (559 aa).

The region spanning 259–333 is the POU-specific domain; that stretch reads EDLPSSDDLE…LLQKWLHEAD (75 aa). A DNA-binding region (homeobox) is located at residues 351-410; the sequence is KRKKRTSIEANVKSILESSFMKLSKPSAQDISSLAEKLSLEKEVVRVWFCNRRQKEKRIT.

It belongs to the POU transcription factor family.

The protein localises to the nucleus. In Dugesia japonica (Planarian), this protein is POU domain protein 1 (POU1).